We begin with the raw amino-acid sequence, 249 residues long: MPVISMKQLLEAGVHFGHQTRRWNPKMKKYIFTERNGIYIIDLQKTVKKVDEAFNFMREVASDNGTILFVGTKKQAQESVRDEAIRSGQYFVNHRWLGGTLTNFETIQKRIQHLKKIEKMEADGTFEVLPKKEVVLLKKEQEKLERFLGGIKDMKGLPDALFIVDPRKERIAVAEARKLHIPIIGIVDTNCDPDEIDYVIPANDDAIRAVKLLTAKMADAIIEVNQGEELTEAEVAPVEEKAAEETTEA.

The protein belongs to the universal ribosomal protein uS2 family.

The polypeptide is Small ribosomal subunit protein uS2 (Listeria innocua serovar 6a (strain ATCC BAA-680 / CLIP 11262)).